Reading from the N-terminus, the 416-residue chain is Tyrosine--tRNA ligase (416 aa).

Tyr-39 contacts L-tyrosine. The 'HIGH' region signature appears at 44-53; that stretch reads CTASSLHVGS. Tyr-176 and Gln-180 together coordinate L-tyrosine. Positions 236 to 240 match the 'KMSKS' region motif; sequence KMGKT. Lys-239 serves as a coordination point for ATP. An S4 RNA-binding domain is found at 349-415; sequence ISLIDLLHDI…GKKRHIKVMV (67 aa).

The protein belongs to the class-I aminoacyl-tRNA synthetase family. TyrS type 1 subfamily. Homodimer.

Its subcellular location is the cytoplasm. It carries out the reaction tRNA(Tyr) + L-tyrosine + ATP = L-tyrosyl-tRNA(Tyr) + AMP + diphosphate + H(+). Catalyzes the attachment of tyrosine to tRNA(Tyr) in a two-step reaction: tyrosine is first activated by ATP to form Tyr-AMP and then transferred to the acceptor end of tRNA(Tyr). In Wolbachia sp. subsp. Brugia malayi (strain TRS), this protein is Tyrosine--tRNA ligase.